Here is a 335-residue protein sequence, read N- to C-terminus: Phosphate acyltransferase (335 aa).

It belongs to the PlsX family. As to quaternary structure, homodimer. Probably interacts with PlsY.

The protein resides in the cytoplasm. It carries out the reaction a fatty acyl-[ACP] + phosphate = an acyl phosphate + holo-[ACP]. Its pathway is lipid metabolism; phospholipid metabolism. Its function is as follows. Catalyzes the reversible formation of acyl-phosphate (acyl-PO(4)) from acyl-[acyl-carrier-protein] (acyl-ACP). This enzyme utilizes acyl-ACP as fatty acyl donor, but not acyl-CoA. The sequence is that of Phosphate acyltransferase from Streptococcus pyogenes serotype M28 (strain MGAS6180).